We begin with the raw amino-acid sequence, 674 residues long: Electrogenic aspartate/glutamate antiporter SLC25A13, mitochondrial (674 aa).

An N-acetylalanine modification is found at Ala2. The segment at 2 to 295 is regulatory N-terminal domain; sequence AAAKVALTKR…TLADIERIAP (294 aa). Topologically, residues 2–331 are mitochondrial intermembrane; the sequence is AAAKVALTKR…LLQVAESAYR (330 aa). EF-hand domains are found at residues 51-86, 87-122, 123-157, and 158-193; these read SQPN…SVLC, APDA…TTIH, QHIP…FLLE, and IQLE…IRPH. Ca(2+)-binding residues include Asp66, Thr68, Asp70, Leu72, and Glu77. A linker loop domain region spans residues 296–311; it reads LEEGTLPFNLAEAQRQ. The carrier domain stretch occupies residues 321 to 611; it reads VLLQVAESAY…LQRWFYIDFG (291 aa). Solcar repeat units lie at residues 326 to 418, 426 to 510, and 518 to 605; these read AESA…VRDK, VPLA…ARAS, and VSPG…LQRW. A helical transmembrane segment spans residues 332–349; the sequence is FGLGSVAGAVGATAVYPI. At 350-392 the chain is on the mitochondrial matrix side; it reads DLVKTRMQNQRSTGSFVGELMYKNSFDCFKKVLRYEGFFGLYR. 2 positions are modified to N6-acetyllysine: Lys353 and Lys372. The helical transmembrane segment at 393–412 threads the bilayer; that stretch reads GLLPQLLGVAPEKAIKLTVN. The Mitochondrial intermembrane portion of the chain corresponds to 413–435; that stretch reads DFVRDKFMHKDGSVPLAAEILAG. The helical transmembrane segment at 436–449 threads the bilayer; the sequence is GCAGGSQVIFTNPL. Residues 450 to 484 lie on the Mitochondrial matrix side of the membrane; sequence EIVKIRLQVAGEITTGPRVSALSVVRDLGFFGIYK. Position 453 is an N6-methyllysine (Lys453). Lys484 is modified (N6-acetyllysine; alternate). Lys484 bears the N6-succinyllysine; alternate mark. A helical transmembrane segment spans residues 485–504; it reads GAKACFLRDIPFSAIYFPCY. Topologically, residues 505-523 are mitochondrial intermembrane; sequence AHARASFANEDGQVSPGSL. A helical membrane pass occupies residues 524–541; the sequence is LLAGAIAGMPAASLVTPA. Over 542–580 the chain is Mitochondrial matrix; the sequence is DVIKTRLQVAARAGQTTYSGVIDCFKKILREEGPKALWK. Residue Lys580 is modified to N6-succinyllysine. A helical membrane pass occupies residues 581 to 599; it reads GAARVFRSSPQFGVTLLTY. Topologically, residues 600–674 are mitochondrial intermembrane; sequence ELLQRWFYID…PTSEAIGGGP (75 aa). A C-terminal domain region spans residues 612–674; it reads GVKPMGSEPV…PTSEAIGGGP (63 aa). N6-acetyllysine is present on Lys661.

Belongs to the mitochondrial carrier (TC 2.A.29) family. In terms of assembly, homodimer (via N-terminus).

Its subcellular location is the mitochondrion inner membrane. The enzyme catalyses L-aspartate(in) + L-glutamate(out) + H(+)(out) = L-aspartate(out) + L-glutamate(in) + H(+)(in). It catalyses the reaction 3-sulfino-L-alanine(out) + L-glutamate(in) + H(+)(in) = 3-sulfino-L-alanine(in) + L-glutamate(out) + H(+)(out). The catalysed reaction is 3-sulfino-L-alanine(out) + L-aspartate(in) = 3-sulfino-L-alanine(in) + L-aspartate(out). In terms of biological role, mitochondrial electrogenic aspartate/glutamate antiporter that favors efflux of aspartate and entry of glutamate and proton within the mitochondria as part of the malate-aspartate shuttle. Also mediates the uptake of L-cysteinesulfinate (3-sulfino-L-alanine) by mitochondria in exchange of L-glutamate and proton. Can also exchange L-cysteinesulfinate with aspartate in their anionic form without any proton translocation. Lacks transport activity towards gamma-aminobutyric acid (GABA). In Macaca fascicularis (Crab-eating macaque), this protein is Electrogenic aspartate/glutamate antiporter SLC25A13, mitochondrial.